Here is a 40-residue protein sequence, read N- to C-terminus: Cell division inhibitor MciZ (40 aa).

As to quaternary structure, interacts with FtsZ. Binds to the C-terminal polymerization interface of FtsZ. Binds to FtsZ filaments.

With respect to regulation, highly effective in inhibiting polymerization at low and intermediate concentrations of GTP and only partially effective at high GTP concentrations. In terms of biological role, blocks Z-ring formation in the mother cell during sporulation by inhibiting the polymerization of FtsZ. Binds to the minus end of FtsZ and functions as a filament-capping protein. At high concentrations, is capable of both capping and sequestration of FtsZ. Decreases the GTPase activity of FtsZ. The chain is Cell division inhibitor MciZ from Bacillus subtilis (strain 168).